The chain runs to 304 residues: MKTAVLLLSYGSPEKMSDIDEYLSKIFGGKPVPKGVAEENYRKYEMFGGLSPSNRIIQSIRDRLQKRFDQSGDVDVFTAFKHWYPSIGEVVPDLKGYDNIVSIPLFSFFSENVKASYYKPLAEALEKNDIRTKMEFVNGISNYDLFIPMWIHLIEEKEKGDSFYLFDAHSLPHPENEEDYLFWLRYSTYKITQIMGLRSSDFGFQGGHEGWLGPSIYNVYRKAKEKKIIAVPISFLYDHLEILYDLDYEFRKKIEEDGYSYERVPMPNDSAIFITLLERIVSSSITHLSGELIGNGKEKSENFI.

His169 and Glu241 together coordinate Fe cation.

Belongs to the ferrochelatase family.

The protein resides in the cytoplasm. It carries out the reaction heme b + 2 H(+) = protoporphyrin IX + Fe(2+). It functions in the pathway porphyrin-containing compound metabolism; protoheme biosynthesis; protoheme from protoporphyrin-IX: step 1/1. Functionally, catalyzes the ferrous insertion into protoporphyrin IX. The polypeptide is Ferrochelatase (Thermoplasma volcanium (strain ATCC 51530 / DSM 4299 / JCM 9571 / NBRC 15438 / GSS1)).